Consider the following 387-residue polypeptide: Limonene 1,2-monooxygenase (387 aa).

It belongs to the bacterial luciferase oxidoreductase family. FAD is required as a cofactor.

It carries out the reaction (4S)-limonene + NADPH + O2 + H(+) = limonene 1,2-epoxide + NADP(+) + H2O. It catalyses the reaction (4S)-limonene + NADH + O2 + H(+) = limonene 1,2-epoxide + NAD(+) + H2O. The enzyme catalyses (4R)-limonene + NADH + O2 + H(+) = limonene 1,2-epoxide + NAD(+) + H2O. The catalysed reaction is (4R)-limonene + NADPH + O2 + H(+) = limonene 1,2-epoxide + NADP(+) + H2O. It functions in the pathway terpene metabolism; (4R)-limonene degradation; (1S,4R)-1-hydroxylimonen-2-one from (4R)-limonene: step 1/3. Acts on both enantiomers of limonene by their NAD-dependent epoxidation at the 1,2 double bond forming limonene-1,2-epoxide. The polypeptide is Limonene 1,2-monooxygenase (limB) (Rhodococcus erythropolis (Arthrobacter picolinophilus)).